Reading from the N-terminus, the 364-residue chain is Coproporphyrin III ferrochelatase (364 aa).

Fe-coproporphyrin III is bound by residues Arg29 and Tyr118. 2 residues coordinate Fe(2+): His169 and Glu250.

The protein belongs to the ferrochelatase family.

The protein localises to the cytoplasm. It carries out the reaction Fe-coproporphyrin III + 2 H(+) = coproporphyrin III + Fe(2+). Its pathway is porphyrin-containing compound metabolism; protoheme biosynthesis. Involved in coproporphyrin-dependent heme b biosynthesis. Catalyzes the insertion of ferrous iron into coproporphyrin III to form Fe-coproporphyrin III. This is Coproporphyrin III ferrochelatase from Streptococcus pneumoniae (strain Taiwan19F-14).